We begin with the raw amino-acid sequence, 199 residues long: GTP cyclohydrolase-2 (199 aa).

Residue 50–54 (RIHSE) coordinates GTP. Positions 55, 66, and 68 each coordinate Zn(2+). Residues Gln-71, 93-95 (EGR), and Thr-115 each bind GTP. The active-site Proton acceptor is the Asp-127. The active-site Nucleophile is Arg-129. GTP-binding residues include Thr-150 and Lys-155.

Belongs to the GTP cyclohydrolase II family. In terms of assembly, homodimer. It depends on Zn(2+) as a cofactor.

It catalyses the reaction GTP + 4 H2O = 2,5-diamino-6-hydroxy-4-(5-phosphoribosylamino)-pyrimidine + formate + 2 phosphate + 3 H(+). Its pathway is cofactor biosynthesis; riboflavin biosynthesis; 5-amino-6-(D-ribitylamino)uracil from GTP: step 1/4. Functionally, catalyzes the conversion of GTP to 2,5-diamino-6-ribosylamino-4(3H)-pyrimidinone 5'-phosphate (DARP), formate and pyrophosphate. This Buchnera aphidicola subsp. Baizongia pistaciae (strain Bp) protein is GTP cyclohydrolase-2.